Here is a 164-residue protein sequence, read N- to C-terminus: 3-isopropylmalate dehydratase small subunit 1 (164 aa).

This sequence belongs to the LeuD family. LeuD type 2 subfamily. Heterodimer of LeuC and LeuD.

It carries out the reaction (2R,3S)-3-isopropylmalate = (2S)-2-isopropylmalate. It functions in the pathway amino-acid biosynthesis; L-leucine biosynthesis; L-leucine from 3-methyl-2-oxobutanoate: step 2/4. Catalyzes the isomerization between 2-isopropylmalate and 3-isopropylmalate, via the formation of 2-isopropylmaleate. The protein is 3-isopropylmalate dehydratase small subunit 1 (leuD1) of Pyrococcus abyssi (strain GE5 / Orsay).